A 359-amino-acid polypeptide reads, in one-letter code: Phospho-N-acetylmuramoyl-pentapeptide-transferase (359 aa).

The next 10 membrane-spanning stretches (helical) occupy residues 27-47 (GAFF…INAL), 70-90 (TPTM…LLWA), 97-117 (VWLV…DDWA), 133-153 (LAIG…VHPE), 167-187 (VLLN…VGSA), 198-218 (GLAI…AYAV), 238-258 (LLIF…YNAP), 261-281 (AVFM…AIAV), 287-307 (IVLA…IVQV), and 336-356 (QVVI…LATL).

The protein belongs to the glycosyltransferase 4 family. MraY subfamily. Requires Mg(2+) as cofactor.

Its subcellular location is the cell inner membrane. It catalyses the reaction UDP-N-acetyl-alpha-D-muramoyl-L-alanyl-gamma-D-glutamyl-meso-2,6-diaminopimeloyl-D-alanyl-D-alanine + di-trans,octa-cis-undecaprenyl phosphate = di-trans,octa-cis-undecaprenyl diphospho-N-acetyl-alpha-D-muramoyl-L-alanyl-D-glutamyl-meso-2,6-diaminopimeloyl-D-alanyl-D-alanine + UMP. It functions in the pathway cell wall biogenesis; peptidoglycan biosynthesis. In terms of biological role, catalyzes the initial step of the lipid cycle reactions in the biosynthesis of the cell wall peptidoglycan: transfers peptidoglycan precursor phospho-MurNAc-pentapeptide from UDP-MurNAc-pentapeptide onto the lipid carrier undecaprenyl phosphate, yielding undecaprenyl-pyrophosphoryl-MurNAc-pentapeptide, known as lipid I. The protein is Phospho-N-acetylmuramoyl-pentapeptide-transferase of Jannaschia sp. (strain CCS1).